We begin with the raw amino-acid sequence, 323 residues long: Fructokinase-1 (323 aa).

This sequence belongs to the carbohydrate kinase PfkB family. Expressed in stems, at higher levels in roots, and hardly detectable in leaves.

It catalyses the reaction D-fructose + ATP = D-fructose 6-phosphate + ADP + H(+). It participates in glycan biosynthesis; starch biosynthesis. Its activity is regulated as follows. Inhibited at high fructose. May play an important role in maintaining the flux of carbon towards starch formation in endosperm. May also be involved in a sugar-sensing pathway. This chain is Fructokinase-1 (FRK1), found in Zea mays (Maize).